We begin with the raw amino-acid sequence, 716 residues long: MSPDAIRVVVCGDDAVGKSSLITSLIKETIIEPQTNNVLPPITISRNDYIESSQEYLNDQDHHHHHQSSPSTMKNKRKHNNKRERERERESSINNVQPNEISEYIPNITTIIDTSSSDMTNLQKELKRADVIWLVYSDHYTYERISLHWMPLFRSMGVNLPIILCANKSDLFPKSKSNLKSTNSDEFVPLINEFKEIEAGVRCSAKNNYNVVEAFYLCQRAVTHPISPIFDAKEGNLKPGAIKPLKRIFWLSDTDQDGYLNFEELSELHKKCFGIEASKSDYEEIVNLIDQKILPSYNTTIETQTPPQQQHLATSAGTPNGTTTTTSKGISEDGFILLNKIYAESGRHETVWCILRAYHYTNSLSLSDKFLYPRLDVNPHSSVELSPTGYKFFVDLFIKFDKDNDGGLNEDELNTLFRSTPGIPKLWVESNFPSSIVCNEEGYVTLQGWLAQWNLTTFLSYKTTLEYLAYLGFDEGNSTKALKVTKPRKIRQKNGKTYRNAVNDRNVFNCFIVGAPKAGKSSLLESFLHGSYSDIYSPTIQPRLVVKDIELRGGKQCYLILEELGELEPAILENKSRLDQCDVICYAYDSSDPESFQYLVELREKHGHLLDEVPAVFVALKADLDKQQQRCDVQPENYTRDLFLNSPLHVSLAWNSSLHEMFIQLVDAAKTPSSATPGIELEVSVDQDDIKHIIMTGAAIAVVGLVSIWVLNSLRR.

The Cytoplasmic segment spans residues 1-692 (MSPDAIRVVV…VSVDQDDIKH (692 aa)). In terms of domain architecture, Miro 1 spans 3–224 (PDAIRVVVCG…FYLCQRAVTH (222 aa)). The tract at residues 58–99 (NDQDHHHHHQSSPSTMKNKRKHNNKRERERERESSINNVQPN) is disordered. GTP contacts are provided by residues 84–91 (ERERERES), 113–115 (DTS), and 167–170 (NKSD). The region spanning 240-275 (GAIKPLKRIFWLSDTDQDGYLNFEELSELHKKCFGI) is the EF-hand 1 domain. Ca(2+) contacts are provided by aspartate 253, aspartate 255, aspartate 257, tyrosine 259, and glutamate 264. The segment at 303–327 (TQTPPQQQHLATSAGTPNGTTTTTS) is disordered. Residues 388–423 (TGYKFFVDLFIKFDKDNDGGLNEDELNTLFRSTPGI) enclose the EF-hand 2 domain. Residues aspartate 401, aspartate 403, aspartate 405, and glutamate 412 each coordinate Ca(2+). The 167-residue stretch at 505 to 671 (RNVFNCFIVG…FIQLVDAAKT (167 aa)) folds into the Miro 2 domain. Residues 514–521 (GAPKAGKS), 550–554 (ELRGG), and 620–623 (LKAD) contribute to the GTP site. Residues 693–713 (IIMTGAAIAVVGLVSIWVLNS) traverse the membrane as a helical; Anchor for type IV membrane protein segment. The Mitochondrial intermembrane segment spans residues 714–716 (LRR).

It belongs to the mitochondrial Rho GTPase family.

It localises to the mitochondrion outer membrane. Functionally, mitochondrial GTPase involved in mitochondrial trafficking. Probably involved in control of anterograde transport of mitochondria and their subcellular distribution. This chain is Mitochondrial Rho GTPase 1 (GEM1), found in Candida albicans (strain SC5314 / ATCC MYA-2876) (Yeast).